Consider the following 568-residue polypeptide: K(+) efflux antiporter 5 (568 aa).

An N-terminal signal peptide occupies residues 1–20 (MARFAVIGLTFLLLLGTSLS). Residues 59-78 (EFSENDSPEGSDGASFNSSV) are disordered. 12 helical membrane passes run 154–174 (LISD…VFSC), 178–198 (PVIV…LKFI), 201–221 (MVQV…ALGL), 230–250 (VVGP…MFLC), 264–284 (GIFV…KFLV), 298–318 (IGIL…LPVL), 334–354 (LLLI…SFVP), 389–409 (LGLS…TTEF), 422–442 (NLFA…HFLW), 447–467 (ILLA…AVVV), 476–496 (ISFH…VLLS), and 510–530 (LLLL…FKLI).

This sequence belongs to the monovalent cation:proton antiporter 2 (CPA2) transporter (TC 2.A.37) family. KEA (TC 2.A.37.1) subfamily. Expressed in roots, stems, leaves, flowers and silique.

It is found in the golgi apparatus membrane. Its subcellular location is the golgi apparatus. The protein resides in the trans-Golgi network membrane. It localises to the prevacuolar compartment membrane. The protein localises to the endomembrane system. It carries out the reaction K(+)(in) + H(+)(out) = K(+)(out) + H(+)(in). Electroneutral K(+)/H(+) efflux antiporter involved in K(+) homeostasis and osmotic adjustment. Together with KEA4 and KEA6, promotes growth and development, and facilitates endosomal pH and ions homeostasis, as well as salt tolerance (e.g. K(+), NaCl and LiCl), probably by supporting cell wall biosynthesis during rapid etiolated seedling growth. The sequence is that of K(+) efflux antiporter 5 from Arabidopsis thaliana (Mouse-ear cress).